Consider the following 773-residue polypeptide: DNA gyrase subunit B (773 aa).

Residues 416 to 530 (SEIFLVEGDS…QGHVYIAQAP (115 aa)) enclose the Toprim domain. Residues Glu-422, Asp-495, and Asp-497 each coordinate Mg(2+).

This sequence belongs to the type II topoisomerase GyrB family. Heterotetramer, composed of two GyrA and two GyrB chains. In the heterotetramer, GyrA contains the active site tyrosine that forms a transient covalent intermediate with DNA, while GyrB binds cofactors and catalyzes ATP hydrolysis. The cofactor is Mg(2+). It depends on Mn(2+) as a cofactor. Ca(2+) is required as a cofactor.

Its subcellular location is the cytoplasm. The enzyme catalyses ATP-dependent breakage, passage and rejoining of double-stranded DNA.. Its function is as follows. A type II topoisomerase that negatively supercoils closed circular double-stranded (ds) DNA in an ATP-dependent manner to modulate DNA topology and maintain chromosomes in an underwound state. Negative supercoiling favors strand separation, and DNA replication, transcription, recombination and repair, all of which involve strand separation. Also able to catalyze the interconversion of other topological isomers of dsDNA rings, including catenanes and knotted rings. Type II topoisomerases break and join 2 DNA strands simultaneously in an ATP-dependent manner. The protein is DNA gyrase subunit B of Helicobacter pylori (strain ATCC 700392 / 26695) (Campylobacter pylori).